Here is a 191-residue protein sequence, read N- to C-terminus: Putative glutathione-dependent formaldehyde-activating enzyme (191 aa).

One can recognise a CENP-V/GFA domain in the interval 20 to 166; that stretch reads FAGGNLYCKC…FKAVGLETYD (147 aa). Zn(2+) contacts are provided by Cys27, Cys29, Cys48, Cys50, Cys53, Cys95, and Cys98.

The protein belongs to the Gfa family. Zn(2+) serves as cofactor.

The catalysed reaction is S-(hydroxymethyl)glutathione = glutathione + formaldehyde. Its pathway is one-carbon metabolism; formaldehyde degradation; formate from formaldehyde (glutathione route): step 1/3. In terms of biological role, catalyzes the condensation of formaldehyde and glutathione to S-hydroxymethylglutathione. This Aspergillus terreus (strain NIH 2624 / FGSC A1156) protein is Putative glutathione-dependent formaldehyde-activating enzyme.